The sequence spans 368 residues: Cobalt-precorrin-5B C(1)-methyltransferase (368 aa).

The protein belongs to the CbiD family.

The enzyme catalyses Co-precorrin-5B + S-adenosyl-L-methionine = Co-precorrin-6A + S-adenosyl-L-homocysteine. It functions in the pathway cofactor biosynthesis; adenosylcobalamin biosynthesis; cob(II)yrinate a,c-diamide from sirohydrochlorin (anaerobic route): step 6/10. Functionally, catalyzes the methylation of C-1 in cobalt-precorrin-5B to form cobalt-precorrin-6A. This Brucella ovis (strain ATCC 25840 / 63/290 / NCTC 10512) protein is Cobalt-precorrin-5B C(1)-methyltransferase.